The primary structure comprises 120 residues: U3-hexatoxin-Hi1a (120 aa).

An N-terminal signal peptide occupies residues M1 to A19. Positions L20 to R51 are excised as a propeptide.

The protein belongs to the neurotoxin 25 family. F7 subfamily. In terms of processing, contains 4 disulfide bonds. Expressed by the venom gland.

Its subcellular location is the secreted. Its function is as follows. Weak insecticidal toxin with probable ion channel impairing activity. In vivo, induces paralysis when injected into sheep blowflies (L.cuprina). Shows weak toxicity, since it is only toxic at high doses, and flies recover within 24 hours. The protein is U3-hexatoxin-Hi1a of Hadronyche infensa (Fraser island funnel-web spider).